Reading from the N-terminus, the 277-residue chain is Methylglyoxal reductase DkgA (277 aa).

The active-site Proton donor is tyrosine 51. Histidine 107 contacts substrate. 187–241 (SPLAQGGKGVFDQEIIRKLAQQYNKTPAQIVIRWHLDSGLIVIPKSVTPARIREN) contacts NADP(+).

This sequence belongs to the aldo/keto reductase family. As to quaternary structure, monomer.

It is found in the cytoplasm. It carries out the reaction hydroxyacetone + NADP(+) = methylglyoxal + NADPH + H(+). In terms of biological role, aldo-keto reductase that significantly contributes to cellular methylglyoxal detoxification by catalyzing the NADPH-dependent conversion of methylglyoxal to acetol. The protein is Methylglyoxal reductase DkgA of Yersinia pestis.